Here is a 313-residue protein sequence, read N- to C-terminus: ADP-L-glycero-D-manno-heptose-6-epimerase (313 aa).

Residues 10 to 11 (MI), 31 to 32 (DN), K38, R53, 75 to 79 (EGACS), and N92 each bind NADP(+). The Proton acceptor role is filled by Y139. Position 143 (K143) interacts with NADP(+). N174 provides a ligand contact to substrate. V175 and K183 together coordinate NADP(+). K183 acts as the Proton acceptor in catalysis. Substrate is bound by residues S185, H192, 206–209 (FAGS), R214, and Y277.

It belongs to the NAD(P)-dependent epimerase/dehydratase family. HldD subfamily. In terms of assembly, homopentamer. NADP(+) is required as a cofactor.

It catalyses the reaction ADP-D-glycero-beta-D-manno-heptose = ADP-L-glycero-beta-D-manno-heptose. It functions in the pathway nucleotide-sugar biosynthesis; ADP-L-glycero-beta-D-manno-heptose biosynthesis; ADP-L-glycero-beta-D-manno-heptose from D-glycero-beta-D-manno-heptose 7-phosphate: step 4/4. Its function is as follows. Catalyzes the interconversion between ADP-D-glycero-beta-D-manno-heptose and ADP-L-glycero-beta-D-manno-heptose via an epimerization at carbon 6 of the heptose. In Vibrio campbellii (strain ATCC BAA-1116), this protein is ADP-L-glycero-D-manno-heptose-6-epimerase.